The chain runs to 262 residues: Inactive snake venom serine proteinase 13 (262 aa).

An N-terminal signal peptide occupies residues 1–18 (MGLIRVLANLLILQLSYA). Positions 19–24 (QKSSEL) are excised as a propeptide. The Peptidase S1 domain occupies 25-250 (VIGGDECNIN…HLDWIQSIIA (226 aa)). Disulfide bonds link C31/C162, C49/C65, C97/C257, C141/C211, C173/C190, and C201/C226. N-linked (GlcNAc...) asparagine glycosylation is found at N78, N102, and N153.

It belongs to the peptidase S1 family. Snake venom subfamily. As to quaternary structure, monomer. In terms of tissue distribution, expressed by the venom gland.

It localises to the secreted. The chain is Inactive snake venom serine proteinase 13 from Crotalus adamanteus (Eastern diamondback rattlesnake).